We begin with the raw amino-acid sequence, 82 residues long: M-zodatoxin-Lt3b (82 aa).

The N-terminal stretch at Met-1–Gly-22 is a signal peptide. Positions Tyr-23–Arg-61 are excised as a propeptide. A Processing quadruplet motif motif is present at residues Glu-58 to Arg-61. Ala-81 is subject to Alanine amide.

Cleavage of the propeptide depends on the processing quadruplet motif (XXXR, with at least one of X being E). As to expression, expressed by the venom gland.

It is found in the secreted. In terms of biological role, it has antimicrobial activity against Gram-positive bacteria (A.globiformis VKM Ac-1112 (MIC=0.7 uM), and B.subtilis VKM B-501 (MIC=2.9 uM)), Gram-negative bacteria (E.coli DH5-alpha (MIC=23 uM), E.coli MH1 (MIC=28 uM), and P.aeruginosa PAO1 (MIC&gt;45 uM)), and yeasts (P.pastoris GS115 (MIC=23 uM), and S.cerevisiae Y190 (MIC=23 uM)). Does not have hemolytic against rabbit erythrocytes. Causes paralysis, but is not lethal when injected into insect (M.domestica) larvae. This chain is M-zodatoxin-Lt3b, found in Lachesana tarabaevi (Spider).